The following is a 2073-amino-acid chain: Non-reducing polyketide synthase cla3 (2073 aa).

The interval 9–242 (LLFGDYTEPW…EKLNIHALQH (234 aa)) is N-terminal acylcarrier protein transacylase domain (SAT). In terms of domain architecture, Ketosynthase family 3 (KS3) spans 363-793 (SGRIAIVGMS…GGNGCLLLEE (431 aa)). Active-site for beta-ketoacyl synthase activity residues include Cys-538, His-673, and His-712. The segment at 898–1198 (TFTGQGSQYA…KIMSTLDATG (301 aa)) is malonyl-CoA:ACP transacylase (MAT) domain. Catalysis depends on Ser-987, which acts as the For acyl/malonyl transferase activity. The product template (PT) domain stretch occupies residues 1276–1590 (STCAQYVITE…QNVILERLLG (315 aa)). Residues 1279–1420 (AQYVITETKT…AGLESQWEKS (142 aa)) form an N-terminal hotdog fold region. Positions 1279–1586 (AQYVITETKT…FHRVQNVILE (308 aa)) constitute a PKS/mFAS DH domain. Residue His-1311 is the Proton acceptor; for dehydratase activity of the active site. A C-terminal hotdog fold region spans residues 1439 to 1586 (QGHRIQRDIY…FHRVQNVILE (148 aa)). Asp-1500 functions as the Proton donor; for dehydratase activity in the catalytic mechanism. Positions 1594-1637 (SSSVPAQASDPLRSKRSPQEARSLPGEAKTEKPGSTIATTSPVL) are disordered. One can recognise a Carrier domain in the interval 1641 to 1718 (KSEQGMFQAL…NLRCAFDEDV (78 aa)). Ser-1678 bears the O-(pantetheine 4'-phosphoryl)serine mark. A compositionally biased stretch (polar residues) spans 1721–1738 (EFTDSEVTSGTPNSSESV). The segment at 1721-1786 (EFTDSEVTSG…GVLDDGSPQP (66 aa)) is disordered. A compositionally biased stretch (basic and acidic residues) spans 1747-1774 (PEEHAFKEPKDDSPLARRDMDNSNDRSL). A thioesterase (TE) domain region spans residues 1805 to 1950 (FLIADGSGSI…MQQHLRAIFK (146 aa)). His-2058 (for thioesterase activity) is an active-site residue.

It participates in secondary metabolite biosynthesis. Highly reducing polyketide synthase; part of the gene cluster that mediates the biosynthesis of cladosporin, a tricyclic octaketide that acts as an antimalarial agent though inhibition of the Plasmodium falciparum lysyl-tRNA synthetase. The highly reducing polyketide synthase cla2 is responsible for biosynthesis up to the pentaketide stage, including of the tetrahydropyran (THP) ring, whereas the three subsequent ketide extensions with no reduction are catalyzed by the non-reducing polyketide synthase cla3. The polypeptide is Non-reducing polyketide synthase cla3 (Cladosporium cladosporioides).